A 255-amino-acid polypeptide reads, in one-letter code: tRNA (guanine-N(1)-)-methyltransferase (255 aa).

Residues glycine 113 and isoleucine 133–leucine 138 contribute to the S-adenosyl-L-methionine site.

Belongs to the RNA methyltransferase TrmD family. As to quaternary structure, homodimer.

The protein localises to the cytoplasm. The catalysed reaction is guanosine(37) in tRNA + S-adenosyl-L-methionine = N(1)-methylguanosine(37) in tRNA + S-adenosyl-L-homocysteine + H(+). Its function is as follows. Specifically methylates guanosine-37 in various tRNAs. The polypeptide is tRNA (guanine-N(1)-)-methyltransferase (Klebsiella pneumoniae subsp. pneumoniae (strain ATCC 700721 / MGH 78578)).